The primary structure comprises 254 residues: Tyrosine-protein phosphatase YwqE (254 aa).

Belongs to the metallo-dependent hydrolases superfamily. CpsB/CapC family. Mn(2+) serves as cofactor.

The catalysed reaction is O-phospho-L-tyrosyl-[protein] + H2O = L-tyrosyl-[protein] + phosphate. Its activity is regulated as follows. Inhibited by vanadate and sodium pyrophosphate. Not inhibited by sodium fluoride. Dephosphorylates the phosphotyrosine-containing proteins YwqD, YwqF and Ssb. This chain is Tyrosine-protein phosphatase YwqE (ywqE), found in Bacillus subtilis (strain 168).